Consider the following 335-residue polypeptide: Acetyl-coenzyme A carboxylase carboxyl transferase subunit alpha (335 aa).

The CoA carboxyltransferase C-terminal domain maps to 40–294; the sequence is QLETLATRRR…KGAIEKHLNE (255 aa).

This sequence belongs to the AccA family. As to quaternary structure, acetyl-CoA carboxylase is a heterohexamer composed of biotin carboxyl carrier protein (AccB), biotin carboxylase (AccC) and two subunits each of ACCase subunit alpha (AccA) and ACCase subunit beta (AccD).

It localises to the cytoplasm. The catalysed reaction is N(6)-carboxybiotinyl-L-lysyl-[protein] + acetyl-CoA = N(6)-biotinyl-L-lysyl-[protein] + malonyl-CoA. Its pathway is lipid metabolism; malonyl-CoA biosynthesis; malonyl-CoA from acetyl-CoA: step 1/1. Its function is as follows. Component of the acetyl coenzyme A carboxylase (ACC) complex. First, biotin carboxylase catalyzes the carboxylation of biotin on its carrier protein (BCCP) and then the CO(2) group is transferred by the carboxyltransferase to acetyl-CoA to form malonyl-CoA. The polypeptide is Acetyl-coenzyme A carboxylase carboxyl transferase subunit alpha (Prochlorococcus marinus subsp. pastoris (strain CCMP1986 / NIES-2087 / MED4)).